We begin with the raw amino-acid sequence, 393 residues long: Prokineticin receptor 1 (393 aa).

Residues 1–62 (METTMGFMDD…TNSRTFFAAK (62 aa)) lie on the Extracellular side of the membrane. Residues Asn-11, Asn-14, and Asn-36 are each glycosylated (N-linked (GlcNAc...) asparagine). A helical membrane pass occupies residues 63–83 (IVIGMALVGIMLVCGIGNFIF). At 84-98 (IAALVRYKKLRNLTN) the chain is on the cytoplasmic side. The chain crosses the membrane as a helical span at residues 99–119 (LLIANLAISDFLVAIVCCPFE). The Extracellular portion of the chain corresponds to 120–146 (MDYYVVRQLSWEHGHVLCTSVNYLRTV). Cysteines 137 and 217 form a disulfide. Residues 147–167 (SLYVSTNALLAIAIDRYLAIV) traverse the membrane as a helical segment. Over 168 to 180 (HPLRPRMKCQTAT) the chain is Cytoplasmic. Residues 181-201 (GLIALVWTVSILIAIPSAYFT) form a helical membrane-spanning segment. Residues 202-232 (TETVLVIVKSQEKIFCGQIWPVDQQLYYKSY) lie on the Extracellular side of the membrane. Residues 233-253 (FLFIFGIEFVGPVVTMTLCYA) form a helical membrane-spanning segment. Residues 254-282 (RISRELWFKAVPGFQTEQIRKRLRCRRKT) are Cytoplasmic-facing. The helical transmembrane segment at 283-303 (VLVLMCILTAYVLCWAPFYGF) threads the bilayer. The Extracellular portion of the chain corresponds to 304 to 322 (TIVRDFFPTVFVKEKHYLT). A helical membrane pass occupies residues 323 to 343 (AFYIVECIAMSNSMINTLCFV). Topologically, residues 344-393 (TVKNDTVKYFKKIMLLHWKASYNGGKSSADLDLKTIGMPATEEVDCIRLK) are cytoplasmic.

The protein belongs to the G-protein coupled receptor 1 family. Localizes to glandular epithelium, stroma and vascular endothelial cells of first trimester decidua (at protein level). Up-regulated in first trimester decidua when compared with non-pregnant endometrium. Expressed in the stomach, throughout the small intestine, colon, rectum, thyroid gland, pituitary gland, salivary gland, adrenal gland, testis, ovary, brain, spleen, prostate and pancreas.

Its subcellular location is the cell membrane. In terms of biological role, receptor for prokineticin 1. Exclusively coupled to the G(q) subclass of heteromeric G proteins. Activation leads to mobilization of calcium, stimulation of phosphoinositide turnover and activation of p44/p42 mitogen-activated protein kinase. May play a role during early pregnancy. In Homo sapiens (Human), this protein is Prokineticin receptor 1 (PROKR1).